The sequence spans 462 residues: Probable peptidoglycan glycosyltransferase FtsW (462 aa).

The Cytoplasmic portion of the chain corresponds to 1–63 (MGCIVCSDGI…VRDGRKFDAP (63 aa)). A helical membrane pass occupies residues 64 to 84 (LLWMVVLMTAFGLLMIYSASV). The Periplasmic segment spans residues 85–97 (YLASKEGGDQFFY). A helical membrane pass occupies residues 98–118 (LTRQAGFVVAGLIASGFLWFL). Topologically, residues 119-125 (CRMRTWR) are cytoplasmic. A helical transmembrane segment spans residues 126 to 146 (RLVPWIFALSGLLLVAVLIAG). Residues 147–160 (REINGATRWIPLGP) lie on the Periplasmic side of the membrane. Residues 161–181 (LNFQPTELFKLAVILYLASLF) traverse the membrane as a helical segment. At 182 to 227 (TRREEVLRSMESLGWQSIWRGTANLIMSATNPQARRETLEMYGRFR) the chain is on the cytoplasmic side. 2 helical membrane passes run 228 to 248 (AIIL…VQPD) and 249 to 269 (FGSF…AGLP). The Cytoplasmic segment spans residues 270–271 (WK). Residues 272–292 (YFFVLVGSVLGGMVLMITAAP) traverse the membrane as a helical segment. The Periplasmic segment spans residues 293-348 (YRVQRVVAFLDPWKDPQGAGYQLTHSLMAIGRGEWFGMGLGASLSKRGFLPEAHTD). A helical transmembrane segment spans residues 349–369 (FIFAIIAEEFGFFGMCVLIFC). Over 370–386 (YGWLVVRAFSIGKQSRD) the chain is Cytoplasmic. Residues 387–409 (LGLTFNAYIASGIGIWIGIQSFF) traverse the membrane as a helical segment. At 410–424 (NIGVNIGALPTKGLT) the chain is on the periplasmic side. The helical transmembrane segment at 425 to 445 (LPLMSYGGSSVFFMLISMMLL) threads the bilayer. Topologically, residues 446 to 462 (LRIDYENRRKMRGYRVE) are cytoplasmic.

The protein belongs to the SEDS family. FtsW subfamily.

The protein resides in the cell inner membrane. The catalysed reaction is [GlcNAc-(1-&gt;4)-Mur2Ac(oyl-L-Ala-gamma-D-Glu-L-Lys-D-Ala-D-Ala)](n)-di-trans,octa-cis-undecaprenyl diphosphate + beta-D-GlcNAc-(1-&gt;4)-Mur2Ac(oyl-L-Ala-gamma-D-Glu-L-Lys-D-Ala-D-Ala)-di-trans,octa-cis-undecaprenyl diphosphate = [GlcNAc-(1-&gt;4)-Mur2Ac(oyl-L-Ala-gamma-D-Glu-L-Lys-D-Ala-D-Ala)](n+1)-di-trans,octa-cis-undecaprenyl diphosphate + di-trans,octa-cis-undecaprenyl diphosphate + H(+). Its pathway is cell wall biogenesis; peptidoglycan biosynthesis. Functionally, peptidoglycan polymerase that is essential for cell division. This chain is Probable peptidoglycan glycosyltransferase FtsW, found in Neisseria gonorrhoeae (strain NCCP11945).